A 129-amino-acid chain; its full sequence is Small ribosomal subunit protein uS8mz (129 aa).

The protein belongs to the universal ribosomal protein uS8 family. Component of the mitochondrial ribosome small subunit.

Its subcellular location is the mitochondrion. The sequence is that of Small ribosomal subunit protein uS8mz (RPS15AB) from Arabidopsis thaliana (Mouse-ear cress).